Reading from the N-terminus, the 130-residue chain is MAVVTFKGLGRRKSSTALVKLTPGSGKLVINNRKAEDYFPNKIVIQDMRQPLEVTKTASIYDINVVVNGGGFTGQAGAIRLGIARALVNMNPELKKQLKQHKLVTRDARVKERKKFGLYGARRAPQFTKR.

Belongs to the universal ribosomal protein uS9 family.

The chain is Small ribosomal subunit protein uS9 from Mycoplasmoides gallisepticum (strain R(low / passage 15 / clone 2)) (Mycoplasma gallisepticum).